The following is a 135-amino-acid chain: Centromere protein S (135 aa).

Residues 103–135 (SLEQKEKKKKKSVSGGNVSRNSDMDTVVPESKD) are disordered.

The protein belongs to the TAF9 family. CENP-S/MHF1 subfamily. In terms of assembly, heterodimer with CENPX, sometimes called MHF; this interaction stabilizes both partners. MHF heterodimers can assemble to form tetrameric structures. MHF also coassemble with CENPT-CENPW heterodimers at centromeres to form the tetrameric CENP-T-W-S-X complex. Forms a discrete complex with FANCM and CENPX, called FANCM-MHF; this interaction, probably mediated by direct binding between CENPS and FANCM, leads to synergistic activation of double-stranded DNA binding and strongly stimulates FANCM-mediated DNA remodeling. Recruited by FANCM to the Fanconi anemia (FA) core complex, which consists of CENPS, CENPX, FANCA, FANCB, FANCC, FANCE, FANCF, FANCG, FANCL, FANCM, FAAP24 and FAAP100. The FA core complex associates with Bloom syndrome (BLM) complex, which consists of at least BLM, DNA topoisomerase 3-alpha (TOP3A), RMI1/BLAP75, RPA1/RPA70 and RPA2/RPA32. The super complex between FA and BLM is called BRAFT. Component of the CENPA-CAD complex, composed of CENPI, CENPK, CENPL, CENPO, CENPP, CENPQ, CENPR and CENPS. The CENPA-CAD complex is probably recruited on centromeres by the CENPA-NAC complex, at least composed of CENPA, CENPC, CENPH, CENPM, CENPN, CENPT and CENPU.

The protein localises to the nucleus. It is found in the chromosome. The protein resides in the centromere. It localises to the kinetochore. Its function is as follows. DNA-binding component of the Fanconi anemia (FA) core complex. Required for the normal activation of the FA pathway, leading to monoubiquitination of the FANCI-FANCD2 complex in response to DNA damage, cellular resistance to DNA cross-linking drugs, and prevention of chromosomal breakage. In complex with CENPX (MHF heterodimer), crucial cofactor for FANCM in both binding and ATP-dependent remodeling of DNA. Stabilizes FANCM. In complex with CENPX and FANCM (but not other FANC proteins), rapidly recruited to blocked forks and promotes gene conversion at blocked replication forks. In complex with CENPT, CENPW and CENPX (CENP-T-W-S-X heterotetramer), involved in the formation of a functional kinetochore outer plate, which is essential for kinetochore-microtubule attachment and faithful mitotic progression. As a component of MHF and CENP-T-W-S-X complexes, binds DNA and bends it to form a nucleosome-like structure. DNA-binding function is fulfilled in the presence of CENPX, with the following preference for DNA substates: Holliday junction &gt; double-stranded &gt; splay arm &gt; single-stranded. Does not bind DNA on its own. The protein is Centromere protein S (cenps) of Xenopus laevis (African clawed frog).